We begin with the raw amino-acid sequence, 119 residues long: Large ribosomal subunit protein uL18 (119 aa).

The protein belongs to the universal ribosomal protein uL18 family. Part of the 50S ribosomal subunit; part of the 5S rRNA/L5/L18/L25 subcomplex. Contacts the 5S and 23S rRNAs.

Its function is as follows. This is one of the proteins that bind and probably mediate the attachment of the 5S RNA into the large ribosomal subunit, where it forms part of the central protuberance. The sequence is that of Large ribosomal subunit protein uL18 from Cupriavidus metallidurans (strain ATCC 43123 / DSM 2839 / NBRC 102507 / CH34) (Ralstonia metallidurans).